We begin with the raw amino-acid sequence, 257 residues long: Electron transfer flavoprotein subunit beta (257 aa).

It belongs to the ETF beta-subunit/FixA family. In terms of assembly, heterodimer of an alpha and a beta subunit. FAD is required as a cofactor. Requires AMP as cofactor.

Functionally, the electron transfer flavoprotein serves as a specific electron acceptor for other dehydrogenases. It transfers the electrons to the main respiratory chain via ETF-ubiquinone oxidoreductase (ETF dehydrogenase). In Bacillus subtilis (strain 168), this protein is Electron transfer flavoprotein subunit beta (etfB).